A 98-amino-acid chain; its full sequence is UPF0235 protein APJL_1398 (98 aa).

Belongs to the UPF0235 family.

This Actinobacillus pleuropneumoniae serotype 3 (strain JL03) protein is UPF0235 protein APJL_1398.